The primary structure comprises 449 residues: Flavonol 7-O-beta-glucosyltransferase UGT74F1 (449 aa).

Residue His-18 is the Proton acceptor of the active site. An anthocyanidin is bound at residue His-18. Asp-111 (charge relay) is an active-site residue. UDP-alpha-D-glucose is bound by residues Thr-133, Gln-327, His-342, Trp-345, Asn-346, Ser-347, Glu-350, Asp-366, and Gln-367.

This sequence belongs to the UDP-glycosyltransferase family.

The enzyme catalyses a 7-O-hydroxy-flavonol + UDP-alpha-D-glucose = a flavonol 7-O-beta-D-glucoside + UDP + H(+). Functionally, possesses quercetin 7-O-glucosyltransferase and 4'-O-glucosyltransferase activities in vitro. Also active in vitro on benzoates and benzoate derivatives. Has low affinity for the tryptophan precursor anthranilate. Catalyzes the formation of anthranilate glucose ester. Is a minor source of this activity in the plant. The sequence is that of Flavonol 7-O-beta-glucosyltransferase UGT74F1 from Arabidopsis thaliana (Mouse-ear cress).